Here is a 575-residue protein sequence, read N- to C-terminus: MPYSEVEAKFLGPGKEQTREPCYKKLKSAADDGVSPLRGGPDIHRIQEKPRNNRVAVATINFRRRVCPQEDKTSTDVLKPLHKEMPGDKLGGSESIGSPALQDGKPSPLAKDDEIYSTSKAFIGPIYKPPEKKKCRERKSETDTFSSIDSKRRQEEKQKSNSKKLEMDTELSQFYKEIEELENENEASQGSCTEPEPSEEPIISYDWACNTLKSEEENKDLSDVLQSHCGYQEYLEDEPDYPCDEQLMPAFCETSFPSFRPEWQSMHPFVIPHDPLSSFNYFNFQRFGTPLHPSPDVFHGRDDSQMQNGCYVDSYQDGWSCLTFDQNDEYANYDVTSNNVHPFRNGCSVQDESVNNGFCEIRECWQDPSMDKHNETDRFVNQWFQEEKLNKLQKLLILLRGLPGSGKTTLSRILLGQSRDGIVFSTDDYFHHQDGYRYNVNQLGDAHDWNQNRAKQAIDQGRSPVIIDNTNTQAWEMKPYVEMAIGKGYRVEFHEPETWWKFDPEELEKRNKHGVSRKKIAQMLDRYEFQMSISIVMNSVEPTQKSIQRPLPLEGEQRWGGSLGSHSQVSIADDY.

Composition is skewed to basic and acidic residues over residues 69–87 (QEDK…EMPG), 129–142 (PPEK…KSET), and 149–167 (DSKR…KLEM). Disordered stretches follow at residues 69-169 (QEDK…EMDT) and 555-575 (GEQR…ADDY). Positions 162-194 (SKKLEMDTELSQFYKEIEELENENEASQGSCTE) form a coiled coil. Polar residues predominate over residues 564–575 (GSHSQVSIADDY).

The sequence is that of NEDD4-binding protein 2-like 2 (N4bp2l2) from Mus musculus (Mouse).